The primary structure comprises 176 residues: Ribosome rescue factor SmrB (176 aa).

The Smr domain maps to 98–173 (LDLHGLTQKQ…GTAALLVLVE (76 aa)).

This sequence belongs to the SmrB family. In terms of assembly, associates with collided ribosomes, but not with correctly translating polysomes.

Acts as a ribosome collision sensor. Detects stalled/collided disomes (pairs of ribosomes where the leading ribosome is stalled and a second ribosome has collided with it) and endonucleolytically cleaves mRNA at the 5' boundary of the stalled ribosome. Stalled/collided disomes form a new interface (primarily via the 30S subunits) that binds SmrB. Cleaved mRNA becomes available for tmRNA ligation, leading to ribosomal subunit dissociation and rescue of stalled ribosomes. The chain is Ribosome rescue factor SmrB from Yersinia enterocolitica serotype O:8 / biotype 1B (strain NCTC 13174 / 8081).